We begin with the raw amino-acid sequence, 181 residues long: Protoporphyrinogen IX dehydrogenase [quinone] (181 aa).

The region spanning threonine 3–alanine 172 is the Flavodoxin-like domain. Residues threonine 9–glutamine 13 and phenylalanine 84–threonine 152 each bind FMN.

It belongs to the HemG family. It depends on FMN as a cofactor.

The protein resides in the cell inner membrane. The catalysed reaction is protoporphyrinogen IX + 3 a menaquinone = protoporphyrin IX + 3 a menaquinol. It carries out the reaction protoporphyrinogen IX + 3 a ubiquinone = protoporphyrin IX + 3 a ubiquinol. The enzyme catalyses protoporphyrinogen IX + 3 a quinone = protoporphyrin IX + 3 a quinol. It participates in porphyrin-containing compound metabolism; protoporphyrin-IX biosynthesis; protoporphyrin-IX from protoporphyrinogen-IX: step 1/1. In terms of biological role, catalyzes the 6-electron oxidation of protoporphyrinogen IX to form protoporphyrin IX; under anaerobic conditions uses menaquinone as an electron acceptor, under aerobic condition uses ubiquinone as an electron acceptor. In Escherichia coli O157:H7, this protein is Protoporphyrinogen IX dehydrogenase [quinone].